Here is a 198-residue protein sequence, read N- to C-terminus: Inner membrane-spanning protein YciB (198 aa).

5 helical membrane-spanning segments follow: residues 36 to 56, 67 to 87, 90 to 110, 135 to 155, and 162 to 182; these read IYSA…ALFI, LTLI…SETF, WKAP…HFIG, IAWI…AFTF, and FKVF…GIYL.

It belongs to the YciB family.

Its subcellular location is the cell inner membrane. Plays a role in cell envelope biogenesis, maintenance of cell envelope integrity and membrane homeostasis. The chain is Inner membrane-spanning protein YciB from Pseudomonas fluorescens (strain Pf0-1).